Consider the following 114-residue polypeptide: MIDRVLLELNKTEGIKGSMVVGKDGLVIASQLPGSVDAELVGAMASAAFGAAERTAAEIGMGTLEQTMIEGEHGKTLMVDAGEGILVVLTDAKVNLGLIRITMKRAADKIKAMF.

This is an uncharacterized protein from Methanocaldococcus jannaschii (strain ATCC 43067 / DSM 2661 / JAL-1 / JCM 10045 / NBRC 100440) (Methanococcus jannaschii).